Consider the following 171-residue polypeptide: S-ribosylhomocysteine lyase (171 aa).

Fe cation is bound by residues H54, H58, and C128.

The protein belongs to the LuxS family. In terms of assembly, homodimer. It depends on Fe cation as a cofactor.

The enzyme catalyses S-(5-deoxy-D-ribos-5-yl)-L-homocysteine = (S)-4,5-dihydroxypentane-2,3-dione + L-homocysteine. In terms of biological role, involved in the synthesis of autoinducer 2 (AI-2) which is secreted by bacteria and is used to communicate both the cell density and the metabolic potential of the environment. The regulation of gene expression in response to changes in cell density is called quorum sensing. Catalyzes the transformation of S-ribosylhomocysteine (RHC) to homocysteine (HC) and 4,5-dihydroxy-2,3-pentadione (DPD). The polypeptide is S-ribosylhomocysteine lyase (Shigella boydii serotype 4 (strain Sb227)).